The chain runs to 1364 residues: Toxin subunit YenA2 (1364 aa).

A coiled-coil region spans residues 1025-1080 (SESYRRRRQEWELQYKQAEWEVNSVEQQINLQNMQIKAANKRLEQVEAQQQQAMAL).

Semipurified toxin complex consists of at least YenA1-YenA2-YenB-YenC1-YenC2-Chi1-Chi2. The Yen-TC:K9 subcomplex is about 26 nm tall and 22 nm in diameter with 5-fold symmetry and 5 copies of YenA1, YenA2, Chi1 and Chi2; the chitinase subunits may be solvent accessible on the exterior the complex. The Yen-TC:K9 subcomplex has no insecticidal activity. The native complex with additional YenB, YenC1 and YenC2 subunits is 16 nm taller and is insecticidal; the toxicity-conferring subunits are present at about 1 copy each. Post-translationally, the isolated toxin complex includes 3 peptides starting between residues 768 and 778 of this protein, which might be physiologically relevant.

Its subcellular location is the secreted. In terms of biological role, part of an orally active toxin complex (TC) with strong insecticidal effects on larvae of the Coleoptera Costelytra zealandica, Acrossidius tasmania and Adoryphorus couloni and some Lepidoptera larvae. The TC has an endochitinase activity. The protein is Toxin subunit YenA2 of Yersinia entomophaga.